A 1442-amino-acid polypeptide reads, in one-letter code: ABC transporter G family member 35 (1442 aa).

The region spanning 169 to 442 (LGMIGIRLAK…FESFGFKCPE (274 aa)) is the ABC transporter 1 domain. 202–209 (GPPSSGKT) is an ATP binding site. An ABC transmembrane type-2 1 domain is found at 520-733 (ELLKSCWDKE…AFNAITVNEL (214 aa)). 7 helical membrane-spanning segments follow: residues 538-558 (FFYV…STLY), 573-593 (IYVG…LAEM), 619-639 (LPTF…WMVV), 657-677 (FLII…IAST), 683-703 (IANT…GFLL), 714-734 (WAYW…NELF), and 769-789 (IGVG…TLAL). The 253-residue stretch at 840–1092 (MSFDDVKYFV…KVVEYFESFP (253 aa)) folds into the ABC transporter 2 domain. Position 885–892 (885–892 (GVSGAGKT)) interacts with ATP. Residues 1165 to 1379 (GQFKSCLWKQ…TIYGLITSQY (215 aa)) enclose the ABC transmembrane type-2 2 domain. 7 helical membrane passes run 1186 to 1206 (LVRF…FWQI), 1218 to 1238 (MVIG…CSTV), 1272 to 1292 (LPYV…MVGF), 1299 to 1319 (FLWF…YGMM), 1329 to 1349 (VASI…GFFI), 1357 to 1377 (WWVW…LITS), and 1414 to 1434 (PVAG…AFCI).

Belongs to the ABC transporter superfamily. ABCG family. PDR (TC 3.A.1.205) subfamily. As to expression, ubiquitous with higher levels in roots.

The protein localises to the membrane. Its function is as follows. May be a general defense protein. This Arabidopsis thaliana (Mouse-ear cress) protein is ABC transporter G family member 35 (ABCG35).